The sequence spans 701 residues: Elongation factor G (701 aa).

The tr-type G domain occupies 8–290 (ERYRNIGISA…AVVDYLPAPT (283 aa)). Residues 17 to 24 (AHIDAGKT), 88 to 92 (DTPGH), and 142 to 145 (NKMD) each bind GTP.

This sequence belongs to the TRAFAC class translation factor GTPase superfamily. Classic translation factor GTPase family. EF-G/EF-2 subfamily.

It localises to the cytoplasm. Catalyzes the GTP-dependent ribosomal translocation step during translation elongation. During this step, the ribosome changes from the pre-translocational (PRE) to the post-translocational (POST) state as the newly formed A-site-bound peptidyl-tRNA and P-site-bound deacylated tRNA move to the P and E sites, respectively. Catalyzes the coordinated movement of the two tRNA molecules, the mRNA and conformational changes in the ribosome. The chain is Elongation factor G from Aeromonas hydrophila subsp. hydrophila (strain ATCC 7966 / DSM 30187 / BCRC 13018 / CCUG 14551 / JCM 1027 / KCTC 2358 / NCIMB 9240 / NCTC 8049).